A 355-amino-acid chain; its full sequence is Uroporphyrinogen decarboxylase (355 aa).

Substrate contacts are provided by residues 27 to 31 (RQAGR), Asp-77, Tyr-154, Thr-209, and His-328.

This sequence belongs to the uroporphyrinogen decarboxylase family. Homodimer.

The protein resides in the cytoplasm. The catalysed reaction is uroporphyrinogen III + 4 H(+) = coproporphyrinogen III + 4 CO2. Its pathway is porphyrin-containing compound metabolism; protoporphyrin-IX biosynthesis; coproporphyrinogen-III from 5-aminolevulinate: step 4/4. In terms of biological role, catalyzes the decarboxylation of four acetate groups of uroporphyrinogen-III to yield coproporphyrinogen-III. The protein is Uroporphyrinogen decarboxylase of Aliivibrio salmonicida (strain LFI1238) (Vibrio salmonicida (strain LFI1238)).